A 558-amino-acid chain; its full sequence is CTP synthase (558 aa).

An amidoligase domain region spans residues 1–270; sequence MTKYVFVTGG…DDLICRELDL (270 aa). S13 lines the CTP pocket. S13 is a UTP binding site. Residues 14–19 and D71 each bind ATP; that span reads SLGKGI. Mg(2+)-binding residues include D71 and E144. CTP-binding positions include 151–153, 191–196, and K227; these read DIE and KTKPTQ. Residues 191–196 and K227 each bind UTP; that span reads KTKPTQ. Residues 295-547 enclose the Glutamine amidotransferase type-1 domain; the sequence is TIGMVGKYVE…ISAALEHQKK (253 aa). Position 356 (G356) interacts with L-glutamine. C383 serves as the catalytic Nucleophile; for glutamine hydrolysis. L-glutamine contacts are provided by residues 384–387, E407, and R473; that span reads LGMQ. Catalysis depends on residues H520 and E522.

Belongs to the CTP synthase family. As to quaternary structure, homotetramer.

The catalysed reaction is UTP + L-glutamine + ATP + H2O = CTP + L-glutamate + ADP + phosphate + 2 H(+). It carries out the reaction L-glutamine + H2O = L-glutamate + NH4(+). It catalyses the reaction UTP + NH4(+) + ATP = CTP + ADP + phosphate + 2 H(+). Its pathway is pyrimidine metabolism; CTP biosynthesis via de novo pathway; CTP from UDP: step 2/2. Allosterically activated by GTP, when glutamine is the substrate; GTP has no effect on the reaction when ammonia is the substrate. The allosteric effector GTP functions by stabilizing the protein conformation that binds the tetrahedral intermediate(s) formed during glutamine hydrolysis. Inhibited by the product CTP, via allosteric rather than competitive inhibition. Functionally, catalyzes the ATP-dependent amination of UTP to CTP with either L-glutamine or ammonia as the source of nitrogen. Regulates intracellular CTP levels through interactions with the four ribonucleotide triphosphates. This chain is CTP synthase, found in Polynucleobacter necessarius subsp. necessarius (strain STIR1).